The chain runs to 133 residues: Small ribosomal subunit protein uS8 (133 aa).

Belongs to the universal ribosomal protein uS8 family. As to quaternary structure, part of the 30S ribosomal subunit. Contacts proteins S5 and S12.

In terms of biological role, one of the primary rRNA binding proteins, it binds directly to 16S rRNA central domain where it helps coordinate assembly of the platform of the 30S subunit. This is Small ribosomal subunit protein uS8 from Nostoc punctiforme (strain ATCC 29133 / PCC 73102).